Consider the following 287-residue polypeptide: Bifunctional protein FolD (287 aa).

NADP(+) is bound by residues 168-170 (GRS), Ser193, and Ile234.

This sequence belongs to the tetrahydrofolate dehydrogenase/cyclohydrolase family. Homodimer.

It carries out the reaction (6R)-5,10-methylene-5,6,7,8-tetrahydrofolate + NADP(+) = (6R)-5,10-methenyltetrahydrofolate + NADPH. It catalyses the reaction (6R)-5,10-methenyltetrahydrofolate + H2O = (6R)-10-formyltetrahydrofolate + H(+). The protein operates within one-carbon metabolism; tetrahydrofolate interconversion. Functionally, catalyzes the oxidation of 5,10-methylenetetrahydrofolate to 5,10-methenyltetrahydrofolate and then the hydrolysis of 5,10-methenyltetrahydrofolate to 10-formyltetrahydrofolate. This is Bifunctional protein FolD from Clostridioides difficile (strain 630) (Peptoclostridium difficile).